The following is an 88-amino-acid chain: Small ribosomal subunit protein uS17 (88 aa).

It belongs to the universal ribosomal protein uS17 family. As to quaternary structure, part of the 30S ribosomal subunit.

Its function is as follows. One of the primary rRNA binding proteins, it binds specifically to the 5'-end of 16S ribosomal RNA. The polypeptide is Small ribosomal subunit protein uS17 (Helicobacter hepaticus (strain ATCC 51449 / 3B1)).